We begin with the raw amino-acid sequence, 192 residues long: FAD-linked sulfhydryl oxidase erv2 (192 aa).

Residues 1–8 (MILNRRIQ) lie on the Cytoplasmic side of the membrane. Residues 9-29 (VILPTLLILSFIIWIFHSVMV) form a helical; Signal-anchor membrane-spanning segment. The Lumenal segment spans residues 30–192 (DKDWRLFMPE…VINEDHDYSG (163 aa)). Positions 61–162 (HDNNTNNLMV…TSCDGFNERY (102 aa)) constitute an ERV/ALR sulfhydryl oxidase domain. 5 residues coordinate FAD: Trp-74, Cys-138, His-141, Asn-145, and Tyr-162. Residues Cys-138 and Cys-155 are joined by a disulfide bond.

Requires FAD as cofactor.

Its subcellular location is the endoplasmic reticulum membrane. The protein localises to the cytoplasm. It is found in the nucleus. The enzyme catalyses 2 R'C(R)SH + O2 = R'C(R)S-S(R)CR' + H2O2. FAD-dependent sulfhydryl oxidase that catalyzes disulfide bond formation in the endoplasmic reticulum lumen. In Schizosaccharomyces pombe (strain 972 / ATCC 24843) (Fission yeast), this protein is FAD-linked sulfhydryl oxidase erv2 (erv2).